The chain runs to 125 residues: Small ribosomal subunit protein uS12 (125 aa).

The residue at position 89 (Asp89) is a 3-methylthioaspartic acid. The disordered stretch occupies residues 101–125 (SLDTAGVKDRKQSRSKYGAKRPKKA). The segment covering 113 to 125 (SRSKYGAKRPKKA) has biased composition (basic residues).

This sequence belongs to the universal ribosomal protein uS12 family. As to quaternary structure, part of the 30S ribosomal subunit. Contacts proteins S8 and S17. May interact with IF1 in the 30S initiation complex.

Functionally, with S4 and S5 plays an important role in translational accuracy. Its function is as follows. Interacts with and stabilizes bases of the 16S rRNA that are involved in tRNA selection in the A site and with the mRNA backbone. Located at the interface of the 30S and 50S subunits, it traverses the body of the 30S subunit contacting proteins on the other side and probably holding the rRNA structure together. The combined cluster of proteins S8, S12 and S17 appears to hold together the shoulder and platform of the 30S subunit. The chain is Small ribosomal subunit protein uS12 from Thiobacillus denitrificans (strain ATCC 25259 / T1).